Consider the following 361-residue polypeptide: D-alanine--D-alanine ligase (361 aa).

The ATP-grasp domain occupies 134-344; sequence KILAQRAGVP…YTDLITKLID (211 aa). 169–224 lines the ATP pocket; it reads ASQLGSDLFVKPSNQGSSVGVSHVTNEKEYKVALAEAFKYDDKVLVEETVHGTEVE. The Mg(2+) site is built by aspartate 297, glutamate 311, and asparagine 313.

Belongs to the D-alanine--D-alanine ligase family. The cofactor is Mg(2+). Mn(2+) is required as a cofactor.

The protein resides in the cytoplasm. It catalyses the reaction 2 D-alanine + ATP = D-alanyl-D-alanine + ADP + phosphate + H(+). Its pathway is cell wall biogenesis; peptidoglycan biosynthesis. Its function is as follows. Cell wall formation. In Lactobacillus johnsonii (strain CNCM I-12250 / La1 / NCC 533), this protein is D-alanine--D-alanine ligase.